The primary structure comprises 276 residues: Bifunctional esterase/perhydrolase DCH (276 aa).

The region spanning Pro-23–Phe-254 is the AB hydrolase-1 domain. Residues Ser-97, Asp-227, and His-256 contribute to the active site.

The protein belongs to the AB hydrolase superfamily. Bacterial non-heme haloperoxidase / perhydrolase family. As to quaternary structure, homodimer.

It carries out the reaction 3,4-dihydrocoumarin + H2O = 3-(2-hydroxyphenyl)propanoate + H(+). The enzyme catalyses peracetic acid + H2O = acetate + H2O2 + H(+). It catalyses the reaction a percarboxylic acid + H2O = a carboxylate + H2O2 + H(+). Inhibited by the serine protease inhibitors diisopropyl fluorophosphate and phenylmethanesulfonyl fluoride. Functionally, multifunctional enzyme, which shows esterase and perhydrolase activities, and is capable of organic acid-assisted bromination of organic compounds. Catalyzes the hydrolysis of 3,4-dihydrocoumarin. Aromatic lactones other than 3,4-dihydrocoumarin, such as 2-coumaranone and homogentisic acid lactone, are also substrates, but their activities relative to that of 3,4-dihydrocoumarin are quite low. Also catalyzes the hydrolysis of several linear esters, with specificity toward methyl esters. In addition, shows perhydrolase activity and catalyzes the dose- and time-dependent degradation of peracetic acid, a broad-spectrum biocide, to acetic acid and hydrogen peroxide. It suggests that in vivo DCH may play a role in the oxidative stress defense system and detoxify peroxoacids in conjunction with the catalase, i.e. peroxoacids are first hydrolyzed to the corresponding acids and hydrogen peroxide by DCH, and then the resulting hydrogen peroxide is degraded by the catalase. Also shows organic acid-assisted bromination activity toward monochlorodimedon when incubated with hydrogen peroxide and dihydrocoumarin or an organic acid, such as acetate and n-butyrate. This chain is Bifunctional esterase/perhydrolase DCH, found in Acinetobacter calcoaceticus.